Here is a 274-residue protein sequence, read N- to C-terminus: Large ribosomal subunit protein uL2 (274 aa).

Positions 223–274 are disordered; it reads VAMNPVDHPHGGGEGRTSGGRHPVTPWGVPTKGYKTRSNKRTDKYIVRRRNK.

The protein belongs to the universal ribosomal protein uL2 family. Part of the 50S ribosomal subunit. Forms a bridge to the 30S subunit in the 70S ribosome.

Its function is as follows. One of the primary rRNA binding proteins. Required for association of the 30S and 50S subunits to form the 70S ribosome, for tRNA binding and peptide bond formation. It has been suggested to have peptidyltransferase activity; this is somewhat controversial. Makes several contacts with the 16S rRNA in the 70S ribosome. In Shewanella oneidensis (strain ATCC 700550 / JCM 31522 / CIP 106686 / LMG 19005 / NCIMB 14063 / MR-1), this protein is Large ribosomal subunit protein uL2.